The sequence spans 326 residues: WRKY transcription factor 8 (326 aa).

A disordered region spans residues 115–172 (VRVSASPSSSEADHHPGEDSGKIRKKREVRDGGEDDQRSQKVVKTKKKEEKKKEPRVS). Composition is skewed to basic and acidic residues over residues 125–153 (EADHHPGEDSGKIRKKREVRDGGEDDQRS) and 161–170 (KKEEKKKEPR). A DNA-binding region (WRKY) is located at residues 177–242 (TEVDHLEDGY…YESQHNHPIP (66 aa)).

Belongs to the WRKY group II-c family. In terms of assembly, interacts with VQ9 (via N-terminus). Highly expressed in roots and at lower levels in rosette leaves, cauline leaves, stems, flowers and siliques.

The protein localises to the nucleus. Transcription factor. Interacts specifically with the W box (5'-TTGAC[CT]-3'), a frequently occurring stress-responsive cis-acting element. Functions as a positive regulator of salt stress response. Binds the W box of LTI78/RD29A stress-response gene and directly regulates its transcription under salt stress. Functions antagonistically with VQ9 to regulate sodium and potassium homeostasis under salt stress by regulating the expression of downstream SOS (SALT OVERLY SENSITIVE) stress-responsive genes. The DNA-binding activity of WRKY8 is decreased by VQ9. Functions as a negative regulator of basal resistance to the bacterial pathogen P.syringae and as positive regulator of resistance to the fungal pathogen to B.cinerea. Functions as a positive regulator of defense response againt tobamovirus (TMV) by regulating both the abscisic acid and ethylene signaling pathways. Positively regulates ABI4 expression and negatively modulates ACS6 and ERF104 expression by directly binding to the W box consensus motifs within their promoters. The polypeptide is WRKY transcription factor 8 (WRKY8) (Arabidopsis thaliana (Mouse-ear cress)).